The sequence spans 234 residues: tRNA (guanine-N(1)-)-methyltransferase (234 aa).

G113 is a binding site for S-adenosyl-L-methionine.

Belongs to the RNA methyltransferase TrmD family. In terms of assembly, homodimer.

Its subcellular location is the cytoplasm. It catalyses the reaction guanosine(37) in tRNA + S-adenosyl-L-methionine = N(1)-methylguanosine(37) in tRNA + S-adenosyl-L-homocysteine + H(+). Its function is as follows. Specifically methylates guanosine-37 in various tRNAs. The polypeptide is tRNA (guanine-N(1)-)-methyltransferase (Gluconobacter oxydans (strain 621H) (Gluconobacter suboxydans)).